The following is a 131-amino-acid chain: uncharacterized protein (131 aa).

Residues 15 to 43 (QLQAEHGSAPSNIASGPSSNQQQQEVQDE) form a disordered region. Polar residues predominate over residues 23–34 (APSNIASGPSSN).

This sequence belongs to the PDCD5 family.

This is an uncharacterized protein from Schizosaccharomyces pombe (strain 972 / ATCC 24843) (Fission yeast).